We begin with the raw amino-acid sequence, 252 residues long: 3-dehydroquinate dehydratase (252 aa).

Residues Ser21, 46–48, and Arg82 each bind 3-dehydroquinate; that span reads EWR. His143 functions as the Proton donor/acceptor in the catalytic mechanism. Lys170 (schiff-base intermediate with substrate) is an active-site residue. Arg213, Ser232, and Gln236 together coordinate 3-dehydroquinate.

It belongs to the type-I 3-dehydroquinase family. In terms of assembly, homodimer.

The catalysed reaction is 3-dehydroquinate = 3-dehydroshikimate + H2O. The protein operates within metabolic intermediate biosynthesis; chorismate biosynthesis; chorismate from D-erythrose 4-phosphate and phosphoenolpyruvate: step 3/7. With respect to regulation, inhibited by (2R)-2-methyl-3-dehydroquinic acid. Its function is as follows. Involved in the third step of the chorismate pathway, which leads to the biosynthesis of aromatic amino acids. Catalyzes the cis-dehydration of 3-dehydroquinate (DHQ) and introduces the first double bond of the aromatic ring to yield 3-dehydroshikimate. The reaction involves the formation of an imine intermediate between the keto group of 3-dehydroquinate and the epsilon-amino group of a Lys-170 at the active site. This is 3-dehydroquinate dehydratase from Salmonella typhimurium (strain LT2 / SGSC1412 / ATCC 700720).